A 463-amino-acid chain; its full sequence is Phytase A (463 aa).

The first 19 residues, 1-19 (MAFFTVALSLYYLLSRVST), serve as a signal peptide directing secretion. Residue Asn26 is glycosylated (N-linked (GlcNAc...) asparagine). Residues Cys29 and Cys38 are joined by a disulfide bond. Asn41 carries an N-linked (GlcNAc...) asparagine glycan. Residues Gln48, Tyr49, Arg79, His80, Arg83, and Thr86 each contribute to the 1D-myo-inositol hexakisphosphate site. 4 disulfides stabilise this stretch: Cys69/Cys410, Cys211/Cys460, Cys260/Cys278, and Cys431/Cys439. His80 serves as the catalytic Nucleophile. Residues Asn103 and Asn118 are each glycosylated (N-linked (GlcNAc...) asparagine). Arg163 contacts 1D-myo-inositol hexakisphosphate. An N-linked (GlcNAc...) asparagine glycan is attached at Asn203. Asp207 contacts 1D-myo-inositol hexakisphosphate. A glycan (N-linked (GlcNAc...) asparagine) is linked at Asn226. Residue Lys297 participates in 1D-myo-inositol hexakisphosphate binding. Asn331 and Asn335 each carry an N-linked (GlcNAc...) asparagine glycan. 1D-myo-inositol hexakisphosphate-binding residues include His357 and Asp358. Asn372 is a glycosylation site (N-linked (GlcNAc...) asparagine).

It belongs to the histidine acid phosphatase family. In terms of assembly, monomer. Post-translationally, seems to be cleaved into at least two pieces, most likely due to proteases in the supernatant. The N-terminal fragment, called phyB seems to retain phytase activity.

It localises to the secreted. The enzyme catalyses 1D-myo-inositol hexakisphosphate + H2O = 1D-myo-inositol 1,2,4,5,6-pentakisphosphate + phosphate. The catalysed reaction is 1D-myo-inositol 1,2,4,5,6-pentakisphosphate + H2O = 1D-myo-inositol 1,2,5,6-tetrakisphosphate + phosphate. It carries out the reaction 1D-myo-inositol 1,2,5,6-tetrakisphosphate + H2O = 1D-myo-inositol 1,2,6-trisphosphate + phosphate. It catalyses the reaction 1D-myo-inositol 1,2,6-trisphosphate + H2O = 1D-myo-inositol 1,2-bisphosphate + phosphate. The enzyme catalyses 1D-myo-inositol 1,2-bisphosphate + H2O = 1D-myo-inositol 2-phosphate + phosphate. Its function is as follows. Catalyzes the phosphate monoester hydrolysis of phytic acid (myo-inositol hexakisphosphate), which results in the stepwise formation of myo-inositol pentakis-, tetrakis-, tris-, bis-, and monophosphates, as well as the liberation of inorganic phosphate. Myo-inositol 2-monophosphate is the end product. Has a broad substrate specificity and is also able to dephosphorylate other classic acid phosphatase substrates such as p-nitrophenyl phosphate, phenyl phosphate, fructose 1,6-bisphosphate, fructose 6-phosphate, glucose 6-phosphate, ribose 5-phosphate, alpha-glycerophosphate, beta-glycerophosphate, 3-phosphoglycerate, as well as ADP and ATP. The polypeptide is Phytase A (Emericella nidulans (strain FGSC A4 / ATCC 38163 / CBS 112.46 / NRRL 194 / M139) (Aspergillus nidulans)).